Here is a 420-residue protein sequence, read N- to C-terminus: Annetocin receptor (420 aa).

Residues 1–54 (MEMDDDEAILLDDIYALASTPNQTIVTSSFPQTVSPGFLARRNEALAMVEVAVQ) lie on the Extracellular side of the membrane. Asparagine 22 carries N-linked (GlcNAc...) asparagine glycosylation. Residues 55–75 (STILILTVVGNAAVLAMIVSL) traverse the membrane as a helical segment. Over 76 to 83 (SRHKDLGR) the chain is Cytoplasmic. The helical transmembrane segment at 84–104 (MYTMIGHLSCADLFVAIFNLL) threads the bilayer. Topologically, residues 105-124 (PQLLWDVTHRFRGGRVLCKL) are extracellular. Cysteine 122 and cysteine 201 are disulfide-bonded. The helical transmembrane segment at 125–145 (VKYVQVVAMYASAYVLMSTAV) threads the bilayer. Topologically, residues 146-166 (DRYTAICHPMRSHTWTSTTAH) are cytoplasmic. Residues 167 to 187 (YLVIGAWVLALVFAVPQLVIF) form a helical membrane-spanning segment. At 188 to 212 (DYVEVVPGSGVYDCVDHFRPRWTLP) the chain is on the extracellular side. Residues 213 to 233 (VYITWFALAVYVIPLVVLATI) form a helical membrane-spanning segment. Topologically, residues 234-328 (YLRICVVVWK…KTKTVKLTLT (95 aa)) are cytoplasmic. The chain crosses the membrane as a helical span at residues 329–349 (VVISYLVCWAPFFVSHIWSAW). At 350–360 (DPHAPFEGTEM) the chain is on the extracellular side. Residues 361-381 (VITLLLGSLNSCINPWIYLAF) traverse the membrane as a helical segment. At 382 to 420 (SDQLRRKVTQCCPRSWGQRPSTLSHDSTDFRSGSRPTHS) the chain is on the cytoplasmic side. The segment at 397 to 420 (WGQRPSTLSHDSTDFRSGSRPTHS) is disordered. Residues 399–420 (QRPSTLSHDSTDFRSGSRPTHS) are compositionally biased toward polar residues.

It belongs to the G-protein coupled receptor 1 family. Vasopressin/oxytocin receptor subfamily. Nephridia in clitellum region.

The protein localises to the cell membrane. Receptor for annetocin. Activation by annetocin may induce egg-laying behavior through calcium-dependent signaling. In Eisenia fetida (Red wiggler worm), this protein is Annetocin receptor.